Consider the following 258-residue polypeptide: Aspartate/glutamate leucyltransferase (258 aa).

The protein belongs to the R-transferase family. Bpt subfamily.

The protein localises to the cytoplasm. The enzyme catalyses N-terminal L-glutamyl-[protein] + L-leucyl-tRNA(Leu) = N-terminal L-leucyl-L-glutamyl-[protein] + tRNA(Leu) + H(+). The catalysed reaction is N-terminal L-aspartyl-[protein] + L-leucyl-tRNA(Leu) = N-terminal L-leucyl-L-aspartyl-[protein] + tRNA(Leu) + H(+). Functions in the N-end rule pathway of protein degradation where it conjugates Leu from its aminoacyl-tRNA to the N-termini of proteins containing an N-terminal aspartate or glutamate. In Rhodopseudomonas palustris (strain TIE-1), this protein is Aspartate/glutamate leucyltransferase.